Consider the following 446-residue polypeptide: Mitochondrial ribonuclease P protein 1 homolog (446 aa).

The N-terminal 24 residues, 1–24 (MLKHFARWRLGSQLLKGCAAPVRQ), are a transit peptide targeting the mitochondrion. The tract at residues 41-67 (PQKKFVNPFSQPAPALSNDTISENKEE) is disordered. A phosphoserine mark is found at serine 50 and serine 57. Threonine 60 bears the Phosphothreonine mark. Serine 62 carries the phosphoserine modification. A coiled-coil region spans residues 119–158 (LWQIEMKKEADQRKKAERAKEAERRVAEMRKEREENTHII). The SAM-dependent MTase TRM10-type domain maps to 179–373 (QNNRLTRAMQ…KHVPRRKVVQ (195 aa)).

This sequence belongs to the class IV-like SAM-binding methyltransferase superfamily. TRM10 family. Component of mitochondrial ribonuclease P, a complex composed of rswl/MRPP1, scu/MRPP2 and mldr/MRPP3.

It is found in the mitochondrion. In terms of biological role, mitochondrial tRNA N1-methyltransferase involved in mitochondrial tRNA maturation. Component of mitochondrial ribonuclease P, a complex composed of rswl/MRPP1, scu/MRPP2 and mldr/MRPP3., which cleaves tRNA molecules in their 5'-ends. Essential for the structural and functional integrity of mitochondria. Function is essential for pupal development. The sequence is that of Mitochondrial ribonuclease P protein 1 homolog from Drosophila melanogaster (Fruit fly).